The primary structure comprises 1256 residues: Pullulanase A (1256 aa).

Positions Met1 to Ser44 are cleaved as a signal peptide. The disordered stretch occupies residues Ile42–Pro117. The segment covering Thr48–Thr61 has biased composition (low complexity). The segment covering Asp79–Leu90 has biased composition (polar residues). Residues Thr99–Glu111 are compositionally biased toward low complexity. Substrate-binding positions include Trp141–Trp143, Trp153, Asp199, Trp248–Trp250, Trp261, Lys303, and Asn308. Ser646 and Tyr648 together coordinate Ca(2+). Substrate contacts are provided by residues Tyr652 to Asp653 and Phe728. Asp763 serves as the catalytic Nucleophile. Glu792 acts as the Proton donor in catalysis. Substrate is bound at residue Trp794. Ca(2+) is bound by residues Met813, Thr816, and Asp817. Asp824, Arg827, and Tyr834 together coordinate substrate. 2 residues coordinate Ca(2+): Asp867 and Asp871. Substrate contacts are provided by residues Asn881, Lys954, and Asp974–Tyr976. Position 977 (Asp977) interacts with Ca(2+). Residues Ser1126–Asn1224 form a disordered region. Basic and acidic residues predominate over residues Ser1134–Asn1172. Over residues Ser1181–Ser1194 the composition is skewed to low complexity. Over residues Gln1200–Lys1210 the composition is skewed to polar residues. Residues Leu1222–Gly1226 carry the LPXTG sorting signal motif. Thr1225 carries the post-translational modification Pentaglycyl murein peptidoglycan amidated threonine. A propeptide spans Gly1226 to Asn1256 (removed by sortase).

The protein belongs to the glycosyl hydrolase 13 family.

Its subcellular location is the secreted. It localises to the cell wall. The protein localises to the cell surface. It catalyses the reaction Hydrolysis of (1-&gt;6)-alpha-D-glucosidic linkages in pullulan, amylopectin and glycogen, and in the alpha- and beta-limit dextrins of amylopectin and glycogen.. With respect to regulation, inhibited by 4-O-alpha-D-glucopyranosylmoranoline (G1M). Its function is as follows. Virulence factor. Involved in the degradation of glycogen of the mammalian host cells. Hydrolyzes the alpha-1,6-branchpoints of glycogen. Hydrolyzes pullulan. Does not hydrolyze dextran. Binds to mouse lung alveolar type II cells that are rich in glycogen stores. Is an alpha-glucan-specific carbohydrate-binding protein, which binds to amylose (pure alpha-(1,4)-linked glucose), amylopectin (alpha-(1,4)-linked glucose with alpha-(1,6) branch points), pullulan (linear polymer of mixed alpha-(1,4)- and alpha-(1,6)-linked glucose) and glycogen (similar to amylopectin with more frequent alpha-(1,6) branch points) in vitro. Does not bind to dextran (a linear polymer of alpha-(1,6)-linked glucose). This is Pullulanase A from Streptococcus pneumoniae serotype 2 (strain D39 / NCTC 7466).